Here is a 261-residue protein sequence, read N- to C-terminus: Zinc import ATP-binding protein ZnuC (261 aa).

The ABC transporter domain occupies 6–227; sequence IQLNNIHLRF…PEYLKLFGKQ (222 aa). 38–45 serves as a coordination point for ATP; the sequence is GPNGAGKS.

This sequence belongs to the ABC transporter superfamily. Zinc importer (TC 3.A.1.15.5) family. The complex is composed of two ATP-binding proteins (ZnuC), two transmembrane proteins (ZnuB) and a solute-binding protein (ZnuA).

It is found in the cell inner membrane. The catalysed reaction is Zn(2+)(out) + ATP(in) + H2O(in) = Zn(2+)(in) + ADP(in) + phosphate(in) + H(+)(in). Functionally, part of the ABC transporter complex ZnuABC involved in zinc import. Responsible for energy coupling to the transport system. The polypeptide is Zinc import ATP-binding protein ZnuC (Saccharophagus degradans (strain 2-40 / ATCC 43961 / DSM 17024)).